Here is a 126-residue protein sequence, read N- to C-terminus: Acidic phospholipase A2 4 (126 aa).

Residue Ser1 is a signal peptide. A propeptide spanning residues 2–7 (NRPMPL) is cleaved from the precursor. 7 cysteine pairs are disulfide-bonded: Cys18–Cys78, Cys33–Cys125, Cys35–Cys51, Cys50–Cys106, Cys57–Cys99, Cys67–Cys92, and Cys85–Cys97. Residues Tyr34, Gly36, and Gly38 each contribute to the Ca(2+) site. His54 is a catalytic residue. A Ca(2+)-binding site is contributed by Asp55. Asp100 is an active-site residue.

This sequence belongs to the phospholipase A2 family. Group I subfamily. D49 sub-subfamily. Monomer. Ca(2+) serves as cofactor. In terms of tissue distribution, expressed by the venom gland.

Its subcellular location is the secreted. It carries out the reaction a 1,2-diacyl-sn-glycero-3-phosphocholine + H2O = a 1-acyl-sn-glycero-3-phosphocholine + a fatty acid + H(+). Its function is as follows. Snake venom phospholipase A2 (PLA2) that exhibits strong anticoagulant activity, which is not due to the catalytic activity. PLA2 catalyzes the calcium-dependent hydrolysis of the 2-acyl groups in 3-sn-phosphoglycerides. In Naja sagittifera (Andaman cobra), this protein is Acidic phospholipase A2 4.